A 320-amino-acid polypeptide reads, in one-letter code: mRNA decay activator protein ZFP36 (320 aa).

A necessary for nuclear export region spans residues 1 to 15 (MDLSAIYESLMSMSH). Residues 1–93 (MDLSAIYESL…PTSPTATPTT (93 aa)) are necessary and sufficient for the association with mRNA decay enzymes and mRNA decay activation. Necessary for localization of ARE-containing mRNAs to processing bodies (PBs) regions lie at residues 1–167 (MDLS…DLAL) and 93–320 (TSSR…SVSE). A disordered region spans residues 17–50 (LSPDHGGTESSGGLWNINSSDSIPSGVTSRLTGR). The span at 27 to 50 (SGGLWNINSSDSIPSGVTSRLTGR) shows a compositional bias: polar residues. Ser-53 is subject to Phosphoserine; by MAPKAPK2. At Ser-59 the chain carries Phosphoserine. The stretch at 64-68 (PPPPG) is one P-P-P-P-G repeat. A compositionally biased stretch (pro residues) spans 66–85 (PPGFAPLAPRPGPELSPSPT). Positions 66–95 (PPGFAPLAPRPGPELSPSPTSPTATPTTSS) are disordered. 2 positions are modified to phosphoserine: Ser-81 and Ser-83. A Phosphothreonine modification is found at Thr-85. Phosphoserine is present on Ser-86. The segment covering 86–95 (SPTATPTTSS) has biased composition (low complexity). A necessary for nuclear localization region spans residues 88–161 (TATPTTSSRY…GSRCHFIHNP (74 aa)). The segment at 90–166 (TPTTSSRYKT…FIHNPTEDLA (77 aa)) is necessary for RNA-binding. C3H1-type zinc fingers lie at residues 96-124 (RYKTELCRTYSESGRCRYGAKCQFAHGPG) and 134-162 (KYKTELCHKFYLQGRCPYGSRCHFIHNPT). The tract at residues 96-187 (RYKTELCRTY…ISFSGLPSGR (92 aa)) is necessary for interaction with PABPN1. Residues 167–320 (LPGQPHVLRQ…PIFNRISVSE (154 aa)) are necessary for mRNA decay activation. Ser-179 is subject to Phosphoserine; by MAPKAPK2. The segment at 180–310 (FSGLPSGRRT…PQPPAPPRRL (131 aa)) is disordered. Ser-190 carries the phosphoserine modification. A P-P-P-P-G repeat occupies 191 to 195 (PPPPG). Over residues 197–209 (SGPSLSSCSFSPS) the composition is skewed to low complexity. Ser-211 carries the phosphoserine modification. A P-P-P-P-G repeat occupies 212-216 (PPPPG). Position 221 is a phosphoserine; by MAPK1; in vitro (Ser-221). The residue at position 251 (Thr-251) is a Phosphothreonine. Residues Ser-270 and Ser-290 each carry the phosphoserine modification. Over residues 280–290 (SSGSSLGGSDS) the composition is skewed to low complexity. The segment covering 300 to 309 (PPQPPAPPRR) has biased composition (pro residues). Residues 306-320 (PPRRLPIFNRISVSE) are interaction with CNOT1. Position 317 is a phosphoserine (Ser-317).

In terms of assembly, associates with cytoplasmic CCR4-NOT and PAN2-PAN3 deadenylase complexes to trigger ARE-containing mRNA deadenylation and decay processes. Part of a mRNA decay activation complex at least composed of poly(A)-specific exoribonucleases CNOT6, EXOSC2 and XRN1 and mRNA-decapping enzymes DCP1A and DCP2. Associates with the RNA exosome complex. Interacts (via phosphorylated form) with 14-3-3 proteins; these interactions promote exclusion of ZFP36 from cytoplasmic stress granules in response to arsenite treatment in a MAPKAPK2-dependent manner and does not prevent CCR4-NOT deadenylase complex recruitment or ZFP36-induced ARE-containing mRNA deadenylation and decay processes. Interacts with 14-3-3 proteins; these interactions occur in response to rapamycin in an Akt-dependent manner. Interacts with AGO2 and AGO4. Interacts (via C-terminus) with CNOT1; this interaction occurs in a RNA-independent manner and induces mRNA deadenylation. Interacts (via N-terminus) with CNOT6. Interacts with CNOT6L. Interacts (via C-terminus) with CNOT7; this interaction occurs in a RNA-independent manner, induces mRNA deadenylation and is inhibited in a phosphorylation MAPKAPK2-dependent manner. Interacts (via unphosphorylated form) with CNOT8; this interaction occurs in a RNA-independent manner and is inhibited in a phosphorylation MAPKAPK2-dependent manner. Interacts with DCP1A. Interacts (via N-terminus) with DCP2. Interacts with EDC3. Interacts (via N-terminus) with EXOSC2. Interacts with heat shock 70 kDa proteins. Interacts with KHSRP; this interaction increases upon cytokine-induced treatment. Interacts with MAP3K4; this interaction enhances the association with SH3KBP1/CIN85. Interacts with MAPKAPK2; this interaction occurs upon skeletal muscle satellite cell activation. Interacts with NCL. Interacts with NUP214; this interaction increases upon lipopolysaccharide (LPS) stimulation. Interacts with PABPC1; this interaction occurs in a RNA-dependent manner. Interacts (via hypophosphorylated form) with PABPN1 (via RRM domain and C-terminal arginine-rich region); this interaction occurs in the nucleus in a RNA-independent manner, decreases in presence of single-stranded poly(A) RNA-oligomer and in a p38 MAPK-dependent-manner and inhibits nuclear poly(A) tail synthesis. Interacts with PAN2. Interacts (via C3H1-type zinc finger domains) with PKM. Interacts (via C3H1-type zinc finger domains) with nuclear RNA poly(A) polymerase. Interacts with PPP2CA; this interaction occurs in LPS-stimulated cells and induces ZFP36 dephosphorylation, and hence may promote ARE-containing mRNAs decay. Interacts (via C-terminus) with PRR5L (via C-terminus); this interaction may accelerate ZFP36-mediated mRNA decay during stress. Interacts (via C-terminus) with SFN; this interaction occurs in a phosphorylation-dependent manner. Interacts (via extreme C-terminal region) with SH3KBP1/CIN85 (via SH3 domains); this interaction enhances MAP3K4-induced phosphorylation of ZFP36 at Ser-59 and Ser-86 and does not alter neither ZFP36 binding to ARE-containing transcripts nor TNF-alpha mRNA decay. Interacts with XRN1. Interacts (via C-terminus and Ser-179 phosphorylated form) with YWHAB; this interaction occurs in a p38/MAPKAPK2-dependent manner, increases cytoplasmic localization of ZFP36 and protects ZFP36 from Ser-179 dephosphorylation by serine/threonine phosphatase 2A, and hence may be crucial for stabilizing ARE-containing mRNAs. Interacts (via phosphorylated form) with YWHAE. Interacts (via C-terminus) with YWHAG; this interaction occurs in a phosphorylation-dependent manner. Interacts with YWHAH; this interaction occurs in a phosphorylation-dependent manner. Interacts with YWHAQ; this interaction occurs in a phosphorylation-dependent manner. Interacts with (via C-terminus) YWHAZ; this interaction occurs in a phosphorylation-dependent manner. Does not interact with SH3KBP1. Interacts (via P-P-P-P-G repeats) with GIGYF2; the interaction is direct. In terms of processing, phosphorylated. Phosphorylation at serine and/or threonine residues occurs in a p38 MAPK- and MAPKAPK2-dependent manner. Phosphorylated by MAPKAPK2 at Ser-53 and Ser-179; phosphorylation increases its stability and cytoplasmic localization, promotes binding to 14-3-3 adapter proteins and inhibits the recruitment of cytoplasmic CCR4-NOT and PAN2-PAN3 deadenylase complexes to the mRNA decay machinery, thereby inhibiting ZFP36-induced ARE-containing mRNA deadenylation and decay processes. Phosphorylation by MAPKAPK2 does not impair ARE-containing RNA-binding. Phosphorylated in a MAPKAPK2- and p38 MAPK-dependent manner upon skeletal muscle satellite cell activation; this phosphorylation inhibits ZFP36-mediated mRNA decay activity, and hence stabilizes MYOD1 mRNA. Phosphorylated by MAPK1 upon mitogen stimulation. Phosphorylated at Ser-59 and Ser-86; these phosphorylations increase in a SH3KBP1-dependent manner. Phosphorylated at serine and threonine residues in a pyruvate kinase PKM- and p38 MAPK-dependent manner. Phosphorylation at Ser-53 may participate in the PKM-mediated degradation of ZFP36 in a p38 MAPK-dependent manner. Dephosphorylated by serine/threonine phosphatase 2A at Ser-179. Ubiquitinated; pyruvate kinase (PKM)-dependent ubiquitination leads to proteasomal degradation through a p38 MAPK signaling pathway.

The protein resides in the nucleus. It localises to the cytoplasm. The protein localises to the cytoplasmic granule. It is found in the P-body. In terms of biological role, zinc-finger RNA-binding protein that destabilizes numerous cytoplasmic AU-rich element (ARE)-containing mRNA transcripts by promoting their poly(A) tail removal or deadenylation, and hence provide a mechanism for attenuating protein synthesis. Acts as an 3'-untranslated region (UTR) ARE mRNA-binding adapter protein to communicate signaling events to the mRNA decay machinery. Recruits deadenylase CNOT7 (and probably the CCR4-NOT complex) via association with CNOT1, and hence promotes ARE-mediated mRNA deadenylation. Also functions by recruiting components of the cytoplasmic RNA decay machinery to the bound ARE-containing mRNAs. Self regulates by destabilizing its own mRNA. Binds to 3'-UTR ARE of numerous mRNAs. Also binds to ARE of its own mRNA. Plays a role in anti-inflammatory responses; suppresses tumor necrosis factor (TNF)-alpha production by stimulating ARE-mediated TNF-alpha mRNA decay and several other inflammatory ARE-containing mRNAs in interferon (IFN)- and/or lipopolysaccharide (LPS)-induced macrophages. Also plays a role in the regulation of dendritic cell maturation at the post-transcriptional level, and hence operates as part of a negative feedback loop to limit the inflammatory response. Promotes ARE-mediated mRNA decay of hypoxia-inducible factor HIF1A mRNA during the response of endothelial cells to hypoxia. Positively regulates early adipogenesis of preadipocytes by promoting ARE-mediated mRNA decay of immediate early genes (IEGs). Negatively regulates hematopoietic/erythroid cell differentiation by promoting ARE-mediated mRNA decay of the transcription factor STAT5B mRNA. Plays a role in maintaining skeletal muscle satellite cell quiescence by promoting ARE-mediated mRNA decay of the myogenic determination factor MYOD1 mRNA. Also associates with and regulates the expression of non-ARE-containing target mRNAs at the post-transcriptional level, such as MHC class I mRNAs. Participates in association with argonaute RISC catalytic components in the ARE-mediated mRNA decay mechanism; assists microRNA (miRNA) targeting ARE-containing mRNAs. May also play a role in the regulation of cytoplasmic mRNA decapping; enhances decapping of ARE-containing RNAs, in vitro. Involved in the delivery of target ARE-mRNAs to processing bodies (PBs). In addition to its cytosolic mRNA-decay function, affects nuclear pre-mRNA processing. Negatively regulates nuclear poly(A)-binding protein PABPN1-stimulated polyadenylation activity on ARE-containing pre-mRNA during LPS-stimulated macrophages. Also involved in the regulation of stress granule (SG) and P-body (PB) formation and fusion. Plays a role in the regulation of keratinocyte proliferation, differentiation and apoptosis. Plays a role as a tumor suppressor by inhibiting cell proliferation in breast cancer cells. The chain is mRNA decay activator protein ZFP36 from Rattus norvegicus (Rat).